A 776-amino-acid polypeptide reads, in one-letter code: DNA ligase (776 aa).

Residues 31–35 (DAEYD), 80–81 (SL), and Glu112 each bind NAD(+). Lys114 (N6-AMP-lysine intermediate) is an active-site residue. NAD(+)-binding residues include Arg135, Glu172, Lys288, and Lys312. Residues Cys406, Cys409, Cys436, and Cys442 each coordinate Zn(2+). The 84-residue stretch at 693-776 (AEGLPLAGQT…TFLAEQGIAV (84 aa)) folds into the BRCT domain.

The protein belongs to the NAD-dependent DNA ligase family. LigA subfamily. Mg(2+) serves as cofactor. Requires Mn(2+) as cofactor.

The catalysed reaction is NAD(+) + (deoxyribonucleotide)n-3'-hydroxyl + 5'-phospho-(deoxyribonucleotide)m = (deoxyribonucleotide)n+m + AMP + beta-nicotinamide D-nucleotide.. DNA ligase that catalyzes the formation of phosphodiester linkages between 5'-phosphoryl and 3'-hydroxyl groups in double-stranded DNA using NAD as a coenzyme and as the energy source for the reaction. It is essential for DNA replication and repair of damaged DNA. The polypeptide is DNA ligase (Pseudomonas putida (strain ATCC 700007 / DSM 6899 / JCM 31910 / BCRC 17059 / LMG 24140 / F1)).